The primary structure comprises 378 residues: Alpha-galactosidase (378 aa).

A signal peptide spans 1–15 (MVKSPGTEDYTRRSL). Cystine bridges form between cysteine 36/cysteine 68 and cysteine 116/cysteine 147. Residue aspartate 145 is the Nucleophile of the active site. Residue 178–182 (EWGEE) participates in substrate binding. The active-site Proton donor is aspartate 200.

Belongs to the glycosyl hydrolase 27 family.

The catalysed reaction is Hydrolysis of terminal, non-reducing alpha-D-galactose residues in alpha-D-galactosides, including galactose oligosaccharides, galactomannans and galactolipids.. In terms of biological role, preferentially cleaves alpha-1,3 and alpha-1,4 glycoside linkages. Involved in the hydrolysis of the galactomannan, it splits alpha-linked galactose moieties. It is particularly suitable for the hydrolysis of guar gum to a gum with improved gelling properties. Can cleave terminal alpha-1,3-linked galactose residues responsible for blood group B specificity from the surface of erythrocytes thereby converting these cells serologically to group O. The sequence is that of Alpha-galactosidase from Coffea arabica (Arabian coffee).